Consider the following 362-residue polypeptide: Probable dual-specificity RNA methyltransferase RlmN (362 aa).

Glu91 acts as the Proton acceptor in catalysis. A Radical SAM core domain is found at 97–329 (QHYGLSVCVT…KKNGVNCVVR (233 aa)). Cys104 and Cys340 are joined by a disulfide. 3 residues coordinate [4Fe-4S] cluster: Cys111, Cys115, and Cys118. S-adenosyl-L-methionine is bound by residues 163 to 164 (GE), Ser195, 218 to 220 (SLH), and Asn296. Catalysis depends on Cys340, which acts as the S-methylcysteine intermediate.

Belongs to the radical SAM superfamily. RlmN family. The cofactor is [4Fe-4S] cluster.

The protein localises to the cytoplasm. It catalyses the reaction adenosine(2503) in 23S rRNA + 2 reduced [2Fe-2S]-[ferredoxin] + 2 S-adenosyl-L-methionine = 2-methyladenosine(2503) in 23S rRNA + 5'-deoxyadenosine + L-methionine + 2 oxidized [2Fe-2S]-[ferredoxin] + S-adenosyl-L-homocysteine. The catalysed reaction is adenosine(37) in tRNA + 2 reduced [2Fe-2S]-[ferredoxin] + 2 S-adenosyl-L-methionine = 2-methyladenosine(37) in tRNA + 5'-deoxyadenosine + L-methionine + 2 oxidized [2Fe-2S]-[ferredoxin] + S-adenosyl-L-homocysteine. Specifically methylates position 2 of adenine 2503 in 23S rRNA and position 2 of adenine 37 in tRNAs. The polypeptide is Probable dual-specificity RNA methyltransferase RlmN (Streptococcus gordonii (strain Challis / ATCC 35105 / BCRC 15272 / CH1 / DL1 / V288)).